Here is a 426-residue protein sequence, read N- to C-terminus: Serine--tRNA ligase (426 aa).

Position 233–235 (233–235 (TSE)) interacts with L-serine. Residue 264-266 (RAE) participates in ATP binding. An L-serine-binding site is contributed by Glu287. Position 351 to 354 (351 to 354 (EISS)) interacts with ATP. Ser387 is a binding site for L-serine.

It belongs to the class-II aminoacyl-tRNA synthetase family. Type-1 seryl-tRNA synthetase subfamily. As to quaternary structure, homodimer. The tRNA molecule binds across the dimer.

It localises to the cytoplasm. It catalyses the reaction tRNA(Ser) + L-serine + ATP = L-seryl-tRNA(Ser) + AMP + diphosphate + H(+). The catalysed reaction is tRNA(Sec) + L-serine + ATP = L-seryl-tRNA(Sec) + AMP + diphosphate + H(+). The protein operates within aminoacyl-tRNA biosynthesis; selenocysteinyl-tRNA(Sec) biosynthesis; L-seryl-tRNA(Sec) from L-serine and tRNA(Sec): step 1/1. In terms of biological role, catalyzes the attachment of serine to tRNA(Ser). Is also able to aminoacylate tRNA(Sec) with serine, to form the misacylated tRNA L-seryl-tRNA(Sec), which will be further converted into selenocysteinyl-tRNA(Sec). The polypeptide is Serine--tRNA ligase (Xanthomonas campestris pv. campestris (strain 8004)).